We begin with the raw amino-acid sequence, 598 residues long: uncharacterized protein (598 aa).

Residues Asp-397, Asp-408, Glu-506, and Glu-520 each contribute to the Mn(2+) site.

The protein belongs to the peptidase M24B family. The cofactor is Mn(2+).

This is an uncharacterized protein from Schizosaccharomyces pombe (strain 972 / ATCC 24843) (Fission yeast).